We begin with the raw amino-acid sequence, 363 residues long: Replication factor C subunit 4 (363 aa).

Residue Met1 is modified to N-acetylmethionine. The tract at residues 1-36 (MQAFLKGTSISTKPPLTKDRGVAASAGSSGENKKAK) is disordered. N6-acetyllysine occurs at positions 6 and 13. 78 to 85 (GPPGTGKT) is an ATP binding site.

It belongs to the activator 1 small subunits family. As to quaternary structure, subunit of the RFC complex, an heteropentameric complex consisting of a large subunit RFC1 and four small subunits RFC2, RFC3, RFC4 and RFC5; the RFC complex interacts with PCNA. Forms an heterotetrameric complex with RFC2, RFC3 and RFC5; this complex has ATPase activity but is not stimulated by PCNA. The heterotetramer of subunits RFC2, RFC3, RFC4 and RFC5 interacts with RAD17. Interacts with ATAD5. Interacts with CTF18. Interacts with CNTD1; this interaction facilitates crossover formation.

Its subcellular location is the nucleus. Subunit of the replication factor C (RFC) complex which acts during elongation of primed DNA templates by DNA polymerases delta and epsilon, and is necessary for ATP-dependent loading of proliferating cell nuclear antigen (PCNA) onto primed DNA. The RFC4 subunit probably functions as a scaffold on which the other complex components can assemble. This Homo sapiens (Human) protein is Replication factor C subunit 4 (RFC4).